Consider the following 382-residue polypeptide: MQIPFSSSTSSSLGIEWELQLVDQQSRELRGEATLILDELRAKVGEREAAKAKHELFESTVEVITGVCGSVGEATADLAGTVSLLRDLAERRGVGLMCSGTHPTSDYAGQRITDDNRYSRLVSQMQWLARRLLIFGVHVHVGVRSPDKAMPIMNALMVYIPHFLALSASSPFWLGGDTGLASSRSQVFASLPTAGLPYPLEDWPRFESFMETLIAAGTIETIREVWWDIRPHPNFGTVELRICDGLPTLLEVGAVAALAQCLVDRMNTQIDRGYRLPTPQRWLVQENKWRAARYGLDAQILIDDRGGVRSVRDDLVDLVEDLLPVAHRLDCAQQLADVLVILETGASYTRQRAVARRADGDLTRVVDTLLEEMNTGRPVVAG.

It belongs to the glutamate--cysteine ligase type 2 family. YbdK subfamily.

The enzyme catalyses L-cysteine + L-glutamate + ATP = gamma-L-glutamyl-L-cysteine + ADP + phosphate + H(+). ATP-dependent carboxylate-amine ligase which exhibits weak glutamate--cysteine ligase activity. This chain is Putative glutamate--cysteine ligase 2-1, found in Frankia alni (strain DSM 45986 / CECT 9034 / ACN14a).